Here is a 290-residue protein sequence, read N- to C-terminus: Lysine export transcriptional regulatory protein LysG (290 aa).

The HTH lysR-type domain maps to 1–57; the sequence is MNPIQLDTLLSIIDEGSFEGASLALSISPSAVSQRVKALEHHVGRVLVSRTQPAKAT. A DNA-binding region (H-T-H motif) is located at residues 18-37; that stretch reads FEGASLALSISPSAVSQRVK.

This sequence belongs to the LysR transcriptional regulatory family.

In terms of biological role, positively regulates the expression of the exporter LysE. Induction requires the presence of a coinducer, which is either intracellular L-lysine, L-arginine or L-citrulline. L-histidine also acts as a coinducer of lysE expression, but this amino acid is not exported by LysE. The lysEG system prevents bacteriostasis due to elevated L-lysine or L-arginine concentrations that arise during growth in the presence of peptides or in mutants possessing a deregulated biosynthesis pathway. The polypeptide is Lysine export transcriptional regulatory protein LysG (Corynebacterium glutamicum (strain ATCC 13032 / DSM 20300 / JCM 1318 / BCRC 11384 / CCUG 27702 / LMG 3730 / NBRC 12168 / NCIMB 10025 / NRRL B-2784 / 534)).